Here is a 91-residue protein sequence, read N- to C-terminus: Cell division topological specificity factor (91 aa).

It belongs to the MinE family.

Its function is as follows. Prevents the cell division inhibition by proteins MinC and MinD at internal division sites while permitting inhibition at polar sites. This ensures cell division at the proper site by restricting the formation of a division septum at the midpoint of the long axis of the cell. The polypeptide is Cell division topological specificity factor (Wigglesworthia glossinidia brevipalpis).